Consider the following 85-residue polypeptide: Splicing factor 3B subunit 5 (85 aa).

It belongs to the SF3B5 family. As to quaternary structure, component of the SF3B complex. SF3B complex associates with the splicing factor SF3A complex and a 12S RNA unit to form the U2 small nuclear ribonucleoproteins complex (U2 snRNP). Identified in the SAGA transcription regulatory histone acetylation (HAT) complex; the interaction is RNA-independent.

It is found in the nucleus. Functionally, involved in pre-mRNA splicing as component of spliceosome. As part of the spliceosome complex, plays a role in the regulation of spermatogonial differentiation. When associated with the SAGA transcription regulatory histone acetylation (HAT) complex, might be involved in the transcriptional activation of a subset of SAGA-regulated genes. In Drosophila melanogaster (Fruit fly), this protein is Splicing factor 3B subunit 5.